The following is a 65-amino-acid chain: Large ribosomal subunit protein bL33 (65 aa).

The segment at 20-40 is disordered; sequence VPPSEKRSPGVSRYTTEKNRR.

Belongs to the bacterial ribosomal protein bL33 family.

The sequence is that of Large ribosomal subunit protein bL33 from Prochlorococcus marinus (strain MIT 9211).